The sequence spans 1402 residues: DNA-directed RNA polymerase subunit beta' (1402 aa).

Zn(2+) contacts are provided by cysteine 71, cysteine 73, cysteine 86, and cysteine 89. Mg(2+)-binding residues include aspartate 462, aspartate 464, and aspartate 466. Cysteine 811, cysteine 885, cysteine 892, and cysteine 895 together coordinate Zn(2+).

This sequence belongs to the RNA polymerase beta' chain family. In terms of assembly, the RNAP catalytic core consists of 2 alpha, 1 beta, 1 beta' and 1 omega subunit. When a sigma factor is associated with the core the holoenzyme is formed, which can initiate transcription. Requires Mg(2+) as cofactor. Zn(2+) serves as cofactor.

The enzyme catalyses RNA(n) + a ribonucleoside 5'-triphosphate = RNA(n+1) + diphosphate. DNA-dependent RNA polymerase catalyzes the transcription of DNA into RNA using the four ribonucleoside triphosphates as substrates. In Rhizobium etli (strain ATCC 51251 / DSM 11541 / JCM 21823 / NBRC 15573 / CFN 42), this protein is DNA-directed RNA polymerase subunit beta'.